The primary structure comprises 710 residues: MEEMEEELKCPVCGSFYREPIILPCSHNLCQACARNILVQTPESESPQSRRASGSGVSDYDYLDLDKMSLYSEADSGYGSYGGFASAPTTPCQKSPNGVRVFPPAMPPPPTHLSPALAPVPRNSCITCPQCHRSLILDDRGLRGFPKNRVLEGVIDRYQQSKAAALKCQLCEKAPKEATVMCEQCDVFYCDPCRLRCHPPRGPLAKHRLVPPAQGRVSRRLSPRKVSTCTDHELENHSMYCVQCKMPVCYQCLEEGKHSSHEVKALGAMWKLHKSQLSQALNGLSDRAKEAKEFLVQLRTMVQQIQENSVEFEACLVAQCDALIDALNRRKAQLLARVNKEHEHKLKVVRDQISHCTVKLRQTTGLMEYCLEVIKENDPSGFLQISDALIRRVHLTEDQWGKGTLTPRMTTDFDLSLDNSPLLQSIHQLDFVQVKASSPVPATPILQLEECCTHNNSATLSWKQPPLSTVAADGYILELDDGSGGQFREVYVGKETMCTVDGLHFNSTYNARVKAFNKTGVSPYSKTLVLQTSEVAWFAFDPGSAHSDIIFSNDNLTVTCSSYDDRVVLGKTGFSKGVHYWELTIDRYDNHPDPAFGVARIDVMKDMMLGKDDKAWAMYVDNNRSWFMHNNSHTNRTEGGITKGATIGVLLDLNRKTLTFFVNNEQQGPIAFENVEGLFFPAVSLNRNVQVTLHTGLPVPDFYSSRASIA.

Residues 10 to 50 (CPVCGSFYREPIILPCSHNLCQACARNILVQTPESESPQSR) form an RING-type zinc finger. Phosphothreonine is present on T41. Phosphoserine is present on residues S44, S46, S49, and S53. B box-type zinc fingers lie at residues 163 to 212 (AAAL…LVPP) and 224 to 266 (RKVS…VKAL). Residues C168, C171, C193, H198, C229, H232, C252, and H258 each contribute to the Zn(2+) site. Residues 273 to 340 (HKSQLSQALN…KAQLLARVNK (68 aa)) adopt a coiled-coil conformation. Residues 374–432 (IKENDPSGFLQISDALIRRVHLTEDQWGKGTLTPRMTTDFDLSLDNSPLLQSIHQLDFV) form the COS domain. The Fibronectin type-III domain occupies 440-535 (VPATPILQLE…KTLVLQTSEV (96 aa)). One can recognise a B30.2/SPRY domain in the interval 533-702 (SEVAWFAFDP…LHTGLPVPDF (170 aa)).

As to quaternary structure, interacts with SNAP25. Auto-ubiquitinated. Brain (at protein level). Expressed in fetal and adult brain.

The protein localises to the cytoplasmic vesicle. Its subcellular location is the secretory vesicle. It localises to the synaptic vesicle. The protein resides in the synapse. It is found in the cytoplasm. The protein localises to the cytoskeleton. Its subcellular location is the cell projection. It localises to the dendrite. The enzyme catalyses S-ubiquitinyl-[E2 ubiquitin-conjugating enzyme]-L-cysteine + [acceptor protein]-L-lysine = [E2 ubiquitin-conjugating enzyme]-L-cysteine + N(6)-ubiquitinyl-[acceptor protein]-L-lysine.. Its pathway is protein modification; protein ubiquitination. Functionally, E3 ubiquitin-protein ligase which ubiquitinates itself in cooperation with an E2 enzyme UBE2D2/UBC4 and serves as a targeting signal for proteasomal degradation. May play a role in regulation of neuronal functions. May act as a regulator of synaptic vesicle exocytosis by controlling the availability of SNAP25 for the SNARE complex formation. This chain is E3 ubiquitin-protein ligase TRIM9 (Trim9), found in Rattus norvegicus (Rat).